A 534-amino-acid chain; its full sequence is NAD(P)H-quinone oxidoreductase chain 4 (534 aa).

14 helical membrane-spanning segments follow: residues 12-32 (FPWL…IPFF), 44-64 (FALS…INGF), 94-114 (ISMP…LAAW), 120-140 (PKLF…VFAV), 144-164 (LLFF…LAIW), 176-196 (FIIY…AMGF), 220-240 (ILCY…VPLH), 251-271 (TAPV…YALL), 285-305 (FAPL…LTSF), 314-334 (IAYS…SFSS), 340-360 (AMLQ…LVGA), 384-404 (FALW…SGFV), 425-445 (VIMA…LLSM), and 472-492 (VYII…PRLV).

It belongs to the complex I subunit 4 family.

Its subcellular location is the cellular thylakoid membrane. It catalyses the reaction a plastoquinone + NADH + (n+1) H(+)(in) = a plastoquinol + NAD(+) + n H(+)(out). It carries out the reaction a plastoquinone + NADPH + (n+1) H(+)(in) = a plastoquinol + NADP(+) + n H(+)(out). In terms of biological role, NDH-1 shuttles electrons from NAD(P)H, via FMN and iron-sulfur (Fe-S) centers, to quinones in the respiratory chain. The immediate electron acceptor for the enzyme in this species is believed to be plastoquinone. Couples the redox reaction to proton translocation (for every two electrons transferred, four hydrogen ions are translocated across the cytoplasmic membrane), and thus conserves the redox energy in a proton gradient. This chain is NAD(P)H-quinone oxidoreductase chain 4, found in Prochlorococcus marinus (strain MIT 9312).